Reading from the N-terminus, the 456-residue chain is Keratin, type I cytoskeletal 12 (456 aa).

The span at 1 to 19 shows a compositional bias: polar residues; the sequence is MSLSVRTSALSRRSSSQNG. Residues 1-25 form a disordered region; the sequence is MSLSVRTSALSRRSSSQNGVAGRPW. Residues 1–114 form a head region; sequence MSLSVRTSAL…GNDGGLLSGS (114 aa). Residues 115-150 form a coil 1A region; it reads EKETMQNLNDRLASYLGKVRALEEANAELENKIREW. The IF rod domain maps to 115–402; that stretch reads EKETMQNLND…RLLEGDTQGD (288 aa). The interval 154–171 is linker 1; that stretch reads RRTGDSGSQSDYSKYYPL. Positions 172–263 are coil 1B; the sequence is IEDLKNKIIS…KNHEEELQSF (92 aa). The tract at residues 264–286 is linker 12; that stretch reads QAGGPGEVNVEMDAAPGVDLTKS. The segment at 287 to 397 is coil 2; that stretch reads GELRKEINSN…IETYRRLLEG (111 aa). Residues 398–456 form a tail region; that stretch reads DTQGDGFDESLSLTVSKPQAPSVDSSKDPNKTRKIKTVVQEIVNGEVVSSQVQELEEAM. The tract at residues 405-430 is disordered; that stretch reads DESLSLTVSKPQAPSVDSSKDPNKTR. Positions 408 to 421 are enriched in polar residues; it reads LSLTVSKPQAPSVD.

This sequence belongs to the intermediate filament family. In terms of assembly, heterotetramer of two type I and two type II keratins. Keratin-3 associates with keratin-12.

Involved in corneal epithelium organization, integrity and corneal keratin expression. This chain is Keratin, type I cytoskeletal 12, found in Rattus norvegicus (Rat).